Here is a 250-residue protein sequence, read N- to C-terminus: MTDILIDNTATEAVRALIQAFSLVPVSQPPEQGSYLLAEHDTVSLRLVGEKSSVIVDFASGAAQYRRTKGGGELIAKAVNHTAHPTVWDATAGLGRDSFVLASLGLAVTAFEQHPAVACLLSDGIRRALLNPETQDTAARITLHFGNAAVQMPALVQTQGKPDIVYLDPMYPERRKSAAVKKEMTYFHRLVGEAQDEAALLHTARQTAKKRVVVKRPRLGEHLAGQAPAYQYTGKSTRFDVYLPYGTDKG.

S-adenosyl-L-methionine contacts are provided by residues 96-97 (RD) and D168.

The protein belongs to the methyltransferase superfamily. RsmJ family.

It is found in the cytoplasm. It carries out the reaction guanosine(1516) in 16S rRNA + S-adenosyl-L-methionine = N(2)-methylguanosine(1516) in 16S rRNA + S-adenosyl-L-homocysteine + H(+). In terms of biological role, specifically methylates the guanosine in position 1516 of 16S rRNA. This is Ribosomal RNA small subunit methyltransferase J from Neisseria meningitidis serogroup C / serotype 2a (strain ATCC 700532 / DSM 15464 / FAM18).